Reading from the N-terminus, the 361-residue chain is Homeobox protein knotted-1-like 6 (361 aa).

A disordered region spans residues 11 to 48 (VGASGVHGGHQHQHHHHPWGSSLSAIVAPPPPPQLQQQ). Residues 19 to 28 (GHQHQHHHHP) are compositionally biased toward basic residues. The ELK domain occupies 242–262 (ELKHHLLKKYSGYLSSLKQEL). The segment at residues 263-326 (SKKKKKGKLP…NQRKRHWKPS (64 aa)) is a DNA-binding region (homeobox; TALE-type).

This sequence belongs to the TALE/KNOX homeobox family. In terms of assembly, interacts with FTIP7. As to expression, expressed predominantly in shoot apices. Also found to a lesser extent in glumes.

Its subcellular location is the nucleus. It localises to the cytoplasm. Transcription factor that regulates genes involved in development. May be involved in shoot formation during embryogenesis. Overexpression in transgenic plants causes altered leaf morphology. Regulates anther dehiscence via direct repression of the auxin biosynthetic gene YUCCA4. Binds to the DNA sequence 5'-TGAC-3' in the promoter of the YUCCA4 gene and represses its activity during anther development. Reduction of auxin levels at late stage of anther development, after meiosis of microspore mother cells, is necessary for normal anther dehiscence and seed setting. The chain is Homeobox protein knotted-1-like 6 (OSH1) from Oryza sativa subsp. japonica (Rice).